The sequence spans 376 residues: Glycerol-3-phosphate acyltransferase 9 (376 aa).

At 1-78 (MSSTAGRLVT…SNPPEPWNWN (78 aa)) the chain is on the cytoplasmic side. Ser13 is subject to Phosphoserine. The next 3 membrane-spanning stretches (helical) occupy residues 79–99 (IYLFPLYCFGVVVRYCILFPL), 102–122 (FTLAFGWIIFLSLFIPVNALL), and 135–155 (VLVEMICSFFVASWTGVVKYH). Over 156 to 376 (GPRPSIRPKQ…ESILARLEEK (221 aa)) the chain is Cytoplasmic. Residues 168–180 (VANHTSMIDFIVL) form a catalytic region. The short motif at 171 to 176 (HTSMID) is the HXXXXD motif element. 209–218 (GCIWFNRSEA) is a sn-glycerol 3-phosphate binding site. Residues 242 to 262 (IFPEGTCVNNNYTVMFKKGAF) form a glycerol-3-phosphate binding region. Residues 266–275 (CTVCPIAIKY) are catalytic. An endoplasmic reticulum targeting region spans residues 369 to 373 (ILARL).

Belongs to the 1-acyl-sn-glycerol-3-phosphate acyltransferase family. As to quaternary structure, self-interacts. Interacts with LPAT2 and LPCAT2. In terms of tissue distribution, up-regulated during embryogenesis. Expressed in seedlings, leaves, stems, roots, floral buds, flowers, pollen, and siliques at various developmental stages.

It is found in the endoplasmic reticulum membrane. The catalysed reaction is sn-glycerol 3-phosphate + an acyl-CoA = a 1-acyl-sn-glycero-3-phosphate + CoA. It participates in glycerolipid metabolism; triacylglycerol biosynthesis. Functionally, essential protein. Required for male and female gametophytes development. Exhibits sn-1 acyltransferase activity with high specificity for acyl-coenzyme A, thus triggering storage lipid biosynthesis and playing an important role in the Kennedy pathway of glycerolipid biosynthesis. Catalyzes triacylglycerol (TAG) accumulation involved in membrane lipid and oil biosynthesis, especially in seeds. Also contributes to the biosynthesis of both polar lipids and TAG in developing leaves, as well as lipid droplet production in developing pollen grains. Seems to not contribute to surface lipid biosynthesis (e.g. waxes and cutin). The sequence is that of Glycerol-3-phosphate acyltransferase 9 from Arabidopsis thaliana (Mouse-ear cress).